We begin with the raw amino-acid sequence, 261 residues long: tRNA 5-carboxymethoxyuridine methyltransferase (261 aa).

S-adenosyl-L-methionine-binding positions include Arg-26, 52–53 (GG), Asp-73, 102–103 (AQ), and His-119.

Belongs to the class I-like SAM-binding methyltransferase superfamily. CmoM family. As to quaternary structure, homodimer.

The catalysed reaction is 5-carboxymethoxyuridine(34) in tRNA + S-adenosyl-L-methionine = 5-methoxycarbonylmethoxyuridine(34) in tRNA + S-adenosyl-L-homocysteine. In terms of biological role, catalyzes the methylation of 5-carboxymethoxyuridine (cmo5U) to form 5-methoxycarbonylmethoxyuridine (mcmo5U) at position 34 in tRNAs. The polypeptide is tRNA 5-carboxymethoxyuridine methyltransferase (Escherichia coli O157:H7).